The chain runs to 352 residues: rRNA 2'-O-methyltransferase fibrillarin (352 aa).

Residues 1-115 are disordered; it reads MGRPEFNRGG…GGAGGMRGGK (115 aa). An asymmetric dimethylarginine mark is found at R8, R16, R19, R23, R27, R35, R43, R51, R55, R58, R63, R67, R70, R75, R81, R85, R91, R95, R98, R102, R105, and R112. The segment covering 8-18 has biased composition (gly residues); it reads RGGGGGGFRGG. The span at 26 to 59 shows a compositional bias: gly residues; sequence SRGGFGGGGRGGYGGGDRGSFGGGDRGGFRGGRG. Gly residues predominate over residues 66 to 113; it reads FRGGRGGGDRGGFGGRGSPRGGFGGRGSPRGGRGSPRGGRGGAGGMRG. Residues 203–204, 222–223, 247–248, and 267–270 each bind S-adenosyl-L-methionine; these read TT, EF, DA, and DVAQ.

The protein belongs to the methyltransferase superfamily. Fibrillarin family. Component of box C/D small nucleolar ribonucleoprotein (snoRNP) particles. It is associated with the U3, U8 and U13 small nuclear RNAs. By homology to other fibrillarins, some or all of the N-terminal domain arginines are modified to asymmetric dimethylarginine (DMA).

It is found in the nucleus. It localises to the nucleolus. Its subcellular location is the nucleoplasm. It carries out the reaction L-glutaminyl-[histone H2A] + S-adenosyl-L-methionine = N(5)-methyl-L-glutaminyl-[histone H2A] + S-adenosyl-L-homocysteine + H(+). S-adenosyl-L-methionine-dependent methyltransferase that has the ability to methylate both RNAs and proteins. Involved in pre-rRNA processing. Utilizes the methyl donor S-adenosyl-L-methionine to catalyze the site-specific 2'-hydroxyl methylation of ribose moieties in pre-ribosomal RNA. Site specificity is provided by a guide RNA that base pairs with the substrate. Methylation occurs at a characteristic distance from the sequence involved in base pairing with the guide RNA. Also acts as a protein methyltransferase by mediating methylation of 'Gln-105' of histone H2A (H2AQ105me), a modification that impairs binding of the FACT complex and is specifically present at 35S ribosomal DNA locus. Plays a role in modulation of nucleolus size most likely through regulating the ribosomal RNA (rRNA) pool. This is rRNA 2'-O-methyltransferase fibrillarin from Caenorhabditis elegans.